The following is an 881-amino-acid chain: MASSTLIQNRSCGVTSSMSSFQIFRGQPLRFPGTRTPAAVQCLKKRRCLRPTESVLESSPGSGSYRIVTGPSGINPSSNGHLQEGSLTHRLPIPMEKSIDNFQSTLYVSDIWSETLQRTECLLQVTENVQMNEWIEEIRMYFRNMTLGEISMSPYDTAWVARVPALDGSHGPQFHRSLQWIIDNQLPDGDWGEPSLFLGYDRVCNTLACVIALKTWGVGAQNVERGIQFLQSNIYKMEEDDANHMPIGFEIVFPAMMEDAKALGLDLPYDATILQQISAEREKKMKKIPMAMVYKYPTTLLHSLEGLHREVDWNKLLQLQSENGSFLYSPASTACALMYTKDVKCFDYLNQLLIKFDHACPNVYPVDLFERLWMVDRLQRLGISRYFEREIRDCLQYVYRYWKDCGIGWASNSSVQDVDDTAMAFRLLRTHGFDVKEDCFRQFFKDGEFFCFAGQSSQAVTGMFNLSRASQTLFPGESLLKKARTFSRNFLRTKHENNECFDKWIITKDLAGEVEYNLTFPWYASLPRLEHRTYLDQYGIDDIWIGKSLYKMPAVTNEVFLKLAKADFNMCQALHKKELEQVIKWNASCQFRDLEFARQKSVECYFAGAATMFEPEMVQARLVWARCCVLTTVLDDYFDHGTPVEELRVFVQAVRTWNPELINGLPEQAKILFMGLYKTVNTIAEEAFMAQKRDVHHHLKHYWDKLITSALKEAEWAESGYVPTFDEYMEVAEISVALEPIVCSTLFFAGHRLDEDVLDSYDYHLVMHLVNRVGRILNDIQGMKREASQGKISSVQIYMEEHPSVPSEAMAIAHLQELVDNSMQQLTYEVLRFTAVPKSCKRIHLNMAKIMHAFYKDTDGFSSLTAMTGFVKKVLFEPVPE.

A chloroplast-targeting transit peptide spans 1–41 (MASSTLIQNRSCGVTSSMSSFQIFRGQPLRFPGTRTPAAVQ). Mg(2+) is bound by residues Asp417, Asp419, Asp635, Asp639, Asn778, Asp779, and Glu786. Positions 417-422 (DVDDTA) match the DXDDTA motif motif. The short motif at 635–639 (DDYFD) is the DDXXD motif element.

This sequence belongs to the terpene synthase family. Requires Mg(2+) as cofactor.

It localises to the plastid. It is found in the chloroplast. It catalyses the reaction (2E,6E,10E)-geranylgeranyl diphosphate = ent-copalyl diphosphate. It carries out the reaction ent-copalyl diphosphate = ent-kaur-16-ene + diphosphate. The catalysed reaction is ent-copalyl diphosphate = ent-beyerene + diphosphate. The enzyme catalyses ent-copalyl diphosphate = ent-sandaracopimara-8(14),15-diene + diphosphate. It catalyses the reaction ent-copalyl diphosphate = ent-isokaurene + diphosphate. It carries out the reaction ent-copalyl diphosphate + H2O = 16alpha-hydroxy-ent-kaurene + diphosphate. The protein operates within secondary metabolite biosynthesis; terpenoid biosynthesis. Functionally, bifunctional copalyl diphosphate/kaurene synthase involved in the biosynthesis of labdane-related diterpenoids (LRDs) natural products such as ent-beyerene, an antimicrobial compound. Supports the conversion of geranylgeranyl diphosphate (GGPP) to ent-copalyl diphosphate (ent-CDP). Also catalyzes the subsequent cyclization of ent-CDP into many diterpenes, including ent-kaur-16-ene as the major product, and ent-beyerene, ent-sandaracopimaradiene, ent-kaur-15-ene (ent-isokaurene) and 16-hydroxy-ent-kaurene (ent-16-alpha-hydroxy-kaurene) as minor products. In Physcomitrium patens (Spreading-leaved earth moss), this protein is Ent-kaurene synthase CPS/KS, chloroplastic.